Consider the following 502-residue polypeptide: Galactose/methyl galactoside import ATP-binding protein MglA (502 aa).

2 ABC transporter domains span residues 10–245 (LEMT…VGRE) and 255–502 (NEPK…SRYL). 42-49 (GENGAGKS) is an ATP binding site.

It belongs to the ABC transporter superfamily. Galactose/methyl galactoside importer (TC 3.A.1.2.3) family. The complex is composed of one ATP-binding protein (MglA), two transmembrane proteins (MglC) and a solute-binding protein (MglB).

It localises to the cell inner membrane. The catalysed reaction is D-galactose(out) + ATP + H2O = D-galactose(in) + ADP + phosphate + H(+). The enzyme catalyses methyl beta-D-galactoside(out) + ATP + H2O = methyl beta-D-galactoside(in) + ADP + phosphate + H(+). In terms of biological role, part of the ABC transporter complex MglABC involved in galactose/methyl galactoside import. Responsible for energy coupling to the transport system. The polypeptide is Galactose/methyl galactoside import ATP-binding protein MglA (Vibrio cholerae serotype O1 (strain ATCC 39315 / El Tor Inaba N16961)).